Reading from the N-terminus, the 61-residue chain is Large ribosomal subunit protein uL29 (61 aa).

It belongs to the universal ribosomal protein uL29 family.

The protein is Large ribosomal subunit protein uL29 of Xanthomonas euvesicatoria pv. vesicatoria (strain 85-10) (Xanthomonas campestris pv. vesicatoria).